A 312-amino-acid chain; its full sequence is MNAEIVVNNSNFSSNTPPFLKKQPEIRRYIIQGSRRFSNYWWAFIVCLGSIGFLLTGISSYFEFQNLLHLQNYFSFANEAQSSLNKVELPIILFFPQGLVMCFYGILGLFLSFYLWFSIFLNIGAGFNEIYIYTGETLKTENQYSKSINSNNLKANNWNSSKIKSNLKKFTKMKDTQTIDYSSENELKNQLTNPNSAVCKFAKGGSEVGCWEQSALTPLPPTPLSHIRIFRWGFPGKNRKINLQYSIDQISAIKLEFLQGFNSKRTICLKLSDQREILLTGSPQGDWETFEQLEKQASELAKFLKVNLEFSS.

A run of 3 helical transmembrane segments spans residues 42–62 (WAFI…SSYF), 91–111 (IILF…GLFL), and 113–133 (FYLW…IYIY).

This sequence belongs to the Ycf4 family.

The protein localises to the plastid. The protein resides in the chloroplast thylakoid membrane. Seems to be required for the assembly of the photosystem I complex. This Pleurastrum terricola (Filamentous green alga) protein is Photosystem I assembly protein Ycf4.